A 141-amino-acid chain; its full sequence is Nucleoside diphosphate kinase (141 aa).

Lys-11, Phe-59, Arg-87, Thr-93, Arg-104, and Asn-114 together coordinate ATP. Residue His-117 is the Pros-phosphohistidine intermediate of the active site.

Belongs to the NDK family. As to quaternary structure, homotetramer. Requires Mg(2+) as cofactor.

Its subcellular location is the cytoplasm. The enzyme catalyses a 2'-deoxyribonucleoside 5'-diphosphate + ATP = a 2'-deoxyribonucleoside 5'-triphosphate + ADP. The catalysed reaction is a ribonucleoside 5'-diphosphate + ATP = a ribonucleoside 5'-triphosphate + ADP. Its function is as follows. Major role in the synthesis of nucleoside triphosphates other than ATP. The ATP gamma phosphate is transferred to the NDP beta phosphate via a ping-pong mechanism, using a phosphorylated active-site intermediate. This chain is Nucleoside diphosphate kinase, found in Bordetella avium (strain 197N).